A 460-amino-acid polypeptide reads, in one-letter code: MNLVTSKPNVLLNPLFAQLGENRHVLVGFSGGLDSTVLLHLLVCLRQQLIPELNIRAIHIHHGLNPQADSWVKHCMQQCDQWKIELKVVRVNIDPRQNGIEAAARTARYQAFSANLAAKEVLLTAQHLDDQCETFLLALKRGSGPAGLSAMAAKMPFAHSQLLRPLLAFSREILENYAQAQQLQWIEDDSNQDDRFDRNFLRLNVLPILNQRWPHFAQATARSAGLCAEQEQLLDELLAENLQQLQGPDRSLSIDGLLQASMAKRAAILRRWLASLGAPMPSQSQLQRLWLEVAMARQDAEPQLMIGTRQVRRFRQHLYLLMPLAEITTNYLPWATVKAAPNSSIIPLLPEPLWLPADLGVLRFVSAGGQAVRPAAVGEEISVRFGLQGDIKIVGRHHSRQSKKVWQELGIPPWQRERIPLLYFGEQLIAAAGVFVTQAGQANENEPCWHLDWDKPLRLG.

30 to 35 (SGGLDS) is a binding site for ATP.

It belongs to the tRNA(Ile)-lysidine synthase family.

Its subcellular location is the cytoplasm. The catalysed reaction is cytidine(34) in tRNA(Ile2) + L-lysine + ATP = lysidine(34) in tRNA(Ile2) + AMP + diphosphate + H(+). Functionally, ligates lysine onto the cytidine present at position 34 of the AUA codon-specific tRNA(Ile) that contains the anticodon CAU, in an ATP-dependent manner. Cytidine is converted to lysidine, thus changing the amino acid specificity of the tRNA from methionine to isoleucine. The sequence is that of tRNA(Ile)-lysidine synthase from Yersinia pestis.